The primary structure comprises 220 residues: Transmembrane emp24 domain-containing protein 1 (220 aa).

The signal sequence occupies residues 1 to 19 (MAWSSSFLFIVLPLAAAVA). Over 20-187 (VQPQDTELTF…LQDSNLERVN (168 aa)) the chain is Extracellular. Residues 36 to 118 (QECFYQTTLY…EKLVFFELIF (83 aa)) enclose the GOLD domain. A coiled-coil region spans residues 138–164 (ELLDIKLEDIKESIESVKSRLERSIQM). A helical membrane pass occupies residues 188 to 208 (FWSAINVGVLVTVAFLQVYML). Over 209–220 (KSLFDDKRKIRT) the chain is Cytoplasmic. The COPII vesicle coat-binding motif lies at 211 to 212 (LF). Residues 211–220 (LFDDKRKIRT) carry the COPI vesicle coat-binding motif.

It belongs to the EMP24/GP25L family. As to quaternary structure, homodimer in endoplasmic reticulum, endoplasmic reticulum-Golgi intermediate compartment and cis-Golgi network. Interacts with IL1RL1. Interacts with RNF26; this interaction is important to modulate innate immune signaling through the cGAS-STING pathway.

Its subcellular location is the cell membrane. It is found in the endoplasmic reticulum membrane. It localises to the golgi apparatus. The protein localises to the cis-Golgi network membrane. The protein resides in the endoplasmic reticulum-Golgi intermediate compartment membrane. Potential role in vesicular protein trafficking, mainly in the early secretory pathway. May act as a cargo receptor at the lumenal side for incorporation of secretory cargo molecules into transport vesicles and may be involved in vesicle coat formation at the cytoplasmic side. Plays a positive role in IL-33-mediated IL-8 and IL-6 production by interacting with interleukin-33 receptor IL1RL1. Plays also a role in the modulation of innate immune signaling through the cGAS-STING pathway by interacting with RNF26. The sequence is that of Transmembrane emp24 domain-containing protein 1 (tmed1) from Xenopus tropicalis (Western clawed frog).